A 312-amino-acid polypeptide reads, in one-letter code: Gamma-soluble NSF attachment protein (312 aa).

Residues 281–312 (KKKSPATPQAKPDGVTATAADEEEDEYSGGLC) form a disordered region. Position 284 is a phosphoserine (S284). Phosphothreonine is present on T287. Positions 300-312 (ADEEEDEYSGGLC) are enriched in acidic residues. S308 carries the phosphoserine modification.

Belongs to the SNAP family. As to quaternary structure, interacts with RAB11FIP5. Interacts with VTI1A.

It localises to the membrane. Its subcellular location is the golgi apparatus. Functionally, required for vesicular transport between the endoplasmic reticulum and the Golgi apparatus. The chain is Gamma-soluble NSF attachment protein from Homo sapiens (Human).